Consider the following 424-residue polypeptide: Gamma-glutamyl phosphate reductase (424 aa).

It belongs to the gamma-glutamyl phosphate reductase family.

It is found in the cytoplasm. It carries out the reaction L-glutamate 5-semialdehyde + phosphate + NADP(+) = L-glutamyl 5-phosphate + NADPH + H(+). The protein operates within amino-acid biosynthesis; L-proline biosynthesis; L-glutamate 5-semialdehyde from L-glutamate: step 2/2. Its function is as follows. Catalyzes the NADPH-dependent reduction of L-glutamate 5-phosphate into L-glutamate 5-semialdehyde and phosphate. The product spontaneously undergoes cyclization to form 1-pyrroline-5-carboxylate. The protein is Gamma-glutamyl phosphate reductase of Shewanella sediminis (strain HAW-EB3).